A 56-amino-acid chain; its full sequence is Stable protein 1 (56 aa).

Residues glycine 1–glycine 44 enclose the Stress-response A/B barrel domain.

The polypeptide is Stable protein 1 (Populus euphratica (Euphrates poplar)).